Here is a 92-residue protein sequence, read N- to C-terminus: UPF0250 protein CGSHiEE_03170 (92 aa).

Belongs to the UPF0250 family.

This chain is UPF0250 protein CGSHiEE_03170, found in Haemophilus influenzae (strain PittEE).